We begin with the raw amino-acid sequence, 326 residues long: Ficolin-1 (326 aa).

An N-terminal signal peptide occupies residues 1-29 (MELSRVAVALGPTGQLLLFLSFQTLAAQA). The 39-residue stretch at 55-93 (GLPGAAGPKGEAGANGPKGERGSPGVVGKAGPAGPKGDR) folds into the Collagen-like domain. 2 stretches are compositionally biased toward low complexity: residues 61–71 (GPKGEAGANGP) and 78–89 (PGVVGKAGPAGP). The segment at 61 to 110 (GPKGEAGANGPKGERGSPGVVGKAGPAGPKGDRGEKGARGEKGEPGQLQS) is disordered. Basic and acidic residues predominate over residues 90 to 104 (KGDRGEKGARGEKGE). In terms of domain architecture, Fibrinogen C-terminal spans 109–326 (QSCATGPRTC…QVSEMKVRLT (218 aa)). Disulfide bonds link Cys-111/Cys-139 and Cys-118/Cys-146. Residues 115–154 (PRTCKELLTRGHFLSGWHTIYLPDCQPLTVLCDMDTDGGG) are a domain; contributes to trimerization. Residues 155–243 (WTVFQRRSDG…LVLGGFLEGN (89 aa)) form a b domain; contributes to trimerization region. Asp-262 and Asp-264 together coordinate Ca(2+). N-linked (GlcNAc...) asparagine glycosylation occurs at Asn-265. A disulfide bridge connects residues Cys-270 and Cys-283. 282 to 284 (ACH) is an a carbohydrate binding site. A glycan (N-linked (GlcNAc...) asparagine) is linked at Asn-313. Residues 317–326 (QVSEMKVRLT) form a p domain region.

This sequence belongs to the ficolin lectin family. Homotrimer. Interacts with elastin/ELN. Interacts (via Fibrinogen C-terminal domain) with FFAR2. Interacts with CRP; may regulate monocyte activation by FCN1. Most abundantly expressed in placenta and lung.

Its subcellular location is the secreted. The protein resides in the cell membrane. Functionally, extracellular lectin functioning as a pattern-recognition receptor in innate immunity. Binds the sugar moieties of pathogen-associated molecular patterns (PAMPs) displayed on microbes and activates the lectin pathway of the complement system. May also activate monocytes through a G protein-coupled receptor, FFAR2, inducing the secretion of interleukin-8/IL-8. Binds preferentially to 9-O-acetylated 2-6-linked sialic acid derivatives and to various glycans containing sialic acid engaged in a 2-3 linkage. The polypeptide is Ficolin-1 (FCN1) (Sus scrofa (Pig)).